The chain runs to 444 residues: Retinoic acid receptor alpha-A (444 aa).

A modulating region spans residues 1 to 71; sequence MYESVDVNPF…PPSPPPPPRI (71 aa). Residues 35–46 show a composition bias toward polar residues; sequence SIRHQHWSGSNH. The tract at residues 35–67 is disordered; the sequence is SIRHQHWSGSNHSIETQSTSSEEIVPSPPSPPP. Positions 47-58 are enriched in low complexity; that stretch reads SIETQSTSSEEI. Residues 72–147 constitute a DNA-binding region (nuclear receptor); sequence YKPCFVCQDK…VGMSKESVRN (76 aa). 2 NR C4-type zinc fingers span residues 75-95 and 111-130; these read CFVCQDKSSGYHYGVSACEGC and CHREKNCIINKVTRNRCQYC. The tract at residues 148–169 is hinge; it reads DRNKKKKEEKKPECTENYTLSP. Positions 170–404 constitute an NR LBD domain; the sequence is DTEQMIDRVR…PLIQEMLENS (235 aa). The short motif at 395–403 is the 9aaTAD element; the sequence is PLIQEMLEN. Residues 402-444 form a disordered region; it reads ENSEGLESSSGAQGSRASATTPGSCSPSLSPNSAQSSPPTQSP.

It belongs to the nuclear hormone receptor family. NR1 subfamily. As to quaternary structure, heterodimer; with an rxr molecule. Binds DNA preferentially as a rar/rxr heterodimer. In terms of tissue distribution, in the embryo, zygotic expression largely overlaps that of rarab, with high levels in hindbrain, lateral mesoderm and tail bud. In the adult, strong expression in brain and muscle, weaker expression in ovary, liver and digestive tract.

The protein resides in the nucleus. Functionally, receptor for retinoic acid. Retinoic acid receptors bind as heterodimers to their target response elements in response to their ligands, all-trans or 9-cis retinoic acid, and regulate gene expression in various biological processes. The rar/rxr heterodimers bind to the retinoic acid response elements (RARE) composed of tandem 5'-AGGTCA-3' sites known as DR1-DR5. Required for hindbrain patterning. The chain is Retinoic acid receptor alpha-A from Danio rerio (Zebrafish).